Reading from the N-terminus, the 104-residue chain is DNA-directed RNA polymerase subunit omega (104 aa).

The protein belongs to the RNA polymerase subunit omega family. As to quaternary structure, the RNAP catalytic core consists of 2 alpha, 1 beta, 1 beta' and 1 omega subunit. When a sigma factor is associated with the core the holoenzyme is formed, which can initiate transcription.

It carries out the reaction RNA(n) + a ribonucleoside 5'-triphosphate = RNA(n+1) + diphosphate. Functionally, promotes RNA polymerase assembly. Latches the N- and C-terminal regions of the beta' subunit thereby facilitating its interaction with the beta and alpha subunits. The protein is DNA-directed RNA polymerase subunit omega of Streptococcus suis (strain 05ZYH33).